A 409-amino-acid chain; its full sequence is Putative protein disulfide-isomerase DDB_G0275025 (409 aa).

Residues 1-21 (MKLINICIFIFAIICIESTFG) form the signal peptide. Residues 28-140 (NVINLTKKNF…AKFSLAKLPS (113 aa)) enclose the Thioredoxin domain. The cysteines at positions 57 and 60 are disulfide-linked. The disordered stretch occupies residues 245–273 (SNNDNNNNNNNNNNEESTKTTTTEKDPAS). Residues 247–259 (NDNNNNNNNNNNE) show a composition bias toward low complexity. Positions 260–273 (ESTKTTTTEKDPAS) are enriched in basic and acidic residues. A Prevents secretion from ER motif is present at residues 406–409 (KDEL).

This sequence belongs to the protein disulfide isomerase family.

The protein localises to the endoplasmic reticulum lumen. The catalysed reaction is Catalyzes the rearrangement of -S-S- bonds in proteins.. This chain is Putative protein disulfide-isomerase DDB_G0275025, found in Dictyostelium discoideum (Social amoeba).